The primary structure comprises 199 residues: Probable nicotinate-nucleotide adenylyltransferase (199 aa).

This sequence belongs to the NadD family.

The enzyme catalyses nicotinate beta-D-ribonucleotide + ATP + H(+) = deamido-NAD(+) + diphosphate. It functions in the pathway cofactor biosynthesis; NAD(+) biosynthesis; deamido-NAD(+) from nicotinate D-ribonucleotide: step 1/1. Functionally, catalyzes the reversible adenylation of nicotinate mononucleotide (NaMN) to nicotinic acid adenine dinucleotide (NaAD). The sequence is that of Probable nicotinate-nucleotide adenylyltransferase from Rhizobium johnstonii (strain DSM 114642 / LMG 32736 / 3841) (Rhizobium leguminosarum bv. viciae).